The chain runs to 197 residues: Imidazoleglycerol-phosphate dehydratase (197 aa).

This sequence belongs to the imidazoleglycerol-phosphate dehydratase family.

It is found in the cytoplasm. It carries out the reaction D-erythro-1-(imidazol-4-yl)glycerol 3-phosphate = 3-(imidazol-4-yl)-2-oxopropyl phosphate + H2O. Its pathway is amino-acid biosynthesis; L-histidine biosynthesis; L-histidine from 5-phospho-alpha-D-ribose 1-diphosphate: step 6/9. The chain is Imidazoleglycerol-phosphate dehydratase from Rhodopseudomonas palustris (strain BisA53).